The chain runs to 377 residues: [2-(trimethylamino)ethyl]phosphonate dioxygenase (377 aa).

Residues 95 to 119 are disordered; it reads DTDQSSEVGRTSPDVETWDSSQPAP. A [2-(trimethylamino)ethyl]phosphonate-binding site is contributed by Asn187. His198 contributes to the 2-oxoglutarate binding site. Fe(2+) is bound by residues His198 and Asp200. Residues Asp200, Asn201, Tyr203, Asn286, and Arg288 each coordinate [2-(trimethylamino)ethyl]phosphonate. 2-oxoglutarate is bound by residues His341, Arg343, and Arg352. Position 341 (His341) interacts with Fe(2+).

This sequence belongs to the gamma-BBH/TMLD family. In terms of assembly, homodimer. It depends on Fe(2+) as a cofactor. L-ascorbate is required as a cofactor.

The enzyme catalyses [2-(trimethylamino)ethyl]phosphonate + 2-oxoglutarate + O2 = [(1R)-1-hydroxy-2-(trimethylamino)ethyl]phosphonate + succinate + CO2. In terms of biological role, involved in the degradation of the naturally occurring organophosphonate 2-(trimethylammonio)ethylphosphonate (TMAEP). Catalyzes the hydroxylation of TMAEP to (R)-1-hydroxy-2-(trimethylammonio)ethylphosphonate (OH-TMAEP). Is highly specific for its N-trimethylated substrate. Cannot use gamma-butyrobetaine as substrate. This Leisingera caerulea (Phaeobacter caeruleus) protein is [2-(trimethylamino)ethyl]phosphonate dioxygenase.